The sequence spans 83 residues: uncharacterized protein (83 aa).

This is an uncharacterized protein from Escherichia phage 186 (Bacteriophage 186).